The following is a 742-amino-acid chain: Ion-translocating oxidoreductase complex subunit C (742 aa).

4Fe-4S ferredoxin-type domains lie at 369 to 397 and 407 to 436; these read GEPQEEQSCIRCSACADACPADLLPQQLY and KATTHNIADCIECGACAWVCPSNIPLVQYF. [4Fe-4S] cluster contacts are provided by Cys-377, Cys-380, Cys-383, Cys-387, Cys-416, Cys-419, Cys-422, and Cys-426. Residues 602–719 are disordered; that stretch reads KLEQQQANAE…PEEQVDPRKA (118 aa).

The protein belongs to the 4Fe4S bacterial-type ferredoxin family. RnfC subfamily. In terms of assembly, the complex is composed of six subunits: RsxA, RsxB, RsxC, RsxD, RsxE and RsxG. [4Fe-4S] cluster is required as a cofactor.

The protein resides in the cell inner membrane. Part of a membrane-bound complex that couples electron transfer with translocation of ions across the membrane. Required to maintain the reduced state of SoxR. The chain is Ion-translocating oxidoreductase complex subunit C from Escherichia coli O6:H1 (strain CFT073 / ATCC 700928 / UPEC).